The chain runs to 595 residues: Apolipoprotein N-acyltransferase 2 (595 aa).

A run of 5 helical transmembrane segments spans residues phenylalanine 30 to phenylalanine 50, leucine 63 to isoleucine 83, valine 95 to phenylalanine 115, alanine 167 to phenylalanine 187, and phenylalanine 210 to lysine 230. One can recognise a CN hydrolase domain in the interval leucine 241–valine 555. Glutamate 293 functions as the Proton acceptor in the catalytic mechanism. The active site involves lysine 372. Cysteine 463 (nucleophile) is an active-site residue. The chain crosses the membrane as a helical span at residues leucine 569 to isoleucine 589.

It belongs to the CN hydrolase family. Apolipoprotein N-acyltransferase subfamily.

It localises to the cell inner membrane. It catalyses the reaction N-terminal S-1,2-diacyl-sn-glyceryl-L-cysteinyl-[lipoprotein] + a glycerophospholipid = N-acyl-S-1,2-diacyl-sn-glyceryl-L-cysteinyl-[lipoprotein] + a 2-acyl-sn-glycero-3-phospholipid + H(+). It functions in the pathway protein modification; lipoprotein biosynthesis (N-acyl transfer). Catalyzes the phospholipid dependent N-acylation of the N-terminal cysteine of apolipoprotein, the last step in lipoprotein maturation. The chain is Apolipoprotein N-acyltransferase 2 from Leptospira interrogans serogroup Icterohaemorrhagiae serovar Lai (strain 56601).